The chain runs to 73 residues: Dipeptidyl peptidase 3 (73 aa).

It belongs to the peptidase M49 family. It depends on Zn(2+) as a cofactor.

It localises to the membrane. It carries out the reaction Release of an N-terminal dipeptide from a peptide comprising four or more residues, with broad specificity. Also acts on dipeptidyl 2-naphthylamides.. Its function is as follows. Degrades neuropeptide proctolin (RYLPT) by cleavage between Tyr and Leu residues. This is Dipeptidyl peptidase 3 from Blaberus craniifer (Death's head cockroach).